A 498-amino-acid polypeptide reads, in one-letter code: ATP synthase subunit beta, chloroplastic (498 aa).

172 to 179 contributes to the ATP binding site; sequence GGAGVGKT.

Belongs to the ATPase alpha/beta chains family. In terms of assembly, F-type ATPases have 2 components, CF(1) - the catalytic core - and CF(0) - the membrane proton channel. CF(1) has five subunits: alpha(3), beta(3), gamma(1), delta(1), epsilon(1). CF(0) has four main subunits: a(1), b(1), b'(1) and c(9-12).

The protein localises to the plastid. Its subcellular location is the chloroplast thylakoid membrane. It catalyses the reaction ATP + H2O + 4 H(+)(in) = ADP + phosphate + 5 H(+)(out). Produces ATP from ADP in the presence of a proton gradient across the membrane. The catalytic sites are hosted primarily by the beta subunits. The protein is ATP synthase subunit beta, chloroplastic of Saruma henryi (Upright wild ginger).